We begin with the raw amino-acid sequence, 166 residues long: uncharacterized protein (166 aa).

A2 carries the N-acetylalanine modification.

In terms of assembly, homodimer.

This is an uncharacterized protein from Arabidopsis thaliana (Mouse-ear cress).